A 239-amino-acid polypeptide reads, in one-letter code: MGRGKVVLQRIENKISRQVTFAKRRNGLLKKAYELSILCDAEVALVLFSHAGRLYQFSSSSNMLKTLERYQRYIYASQDAAAPTSDEMQNNYQEYVNLKAHVEILQQSQRNLLGEDLAPLATNELEQLESQVVRTLKQIRSRKTQVLLDELCDLKRKEQMLQDANRVLKRKLDEIDVEAAPPQPPWNGNCSNGHGGGGGVFSSEPPQPEHFFQALGLHAVDVNQPPAPPPGGYPPEWMA.

Residues 1 to 61 (MGRGKVVLQR…GRLYQFSSSS (61 aa)) form the MADS-box domain. Positions 88 to 178 (MQNNYQEYVN…KRKLDEIDVE (91 aa)) constitute a K-box domain. The interval 179-208 (AAPPQPPWNGNCSNGHGGGGGVFSSEPPQP) is disordered.

As to expression, highly expressed in leaves and at low levels in roots and spikelets (rice flower).

Its subcellular location is the nucleus. Functionally, probable transcription factor. This chain is MADS-box transcription factor 34 (MADS34), found in Oryza sativa subsp. japonica (Rice).